The sequence spans 310 residues: Acetylglutamate kinase (310 aa).

Substrate contacts are provided by residues 83–84, R105, and N207; that span reads GG.

Belongs to the acetylglutamate kinase family. ArgB subfamily.

The protein localises to the cytoplasm. It catalyses the reaction N-acetyl-L-glutamate + ATP = N-acetyl-L-glutamyl 5-phosphate + ADP. The protein operates within amino-acid biosynthesis; L-arginine biosynthesis; N(2)-acetyl-L-ornithine from L-glutamate: step 2/4. Functionally, catalyzes the ATP-dependent phosphorylation of N-acetyl-L-glutamate. The chain is Acetylglutamate kinase from Ralstonia nicotianae (strain ATCC BAA-1114 / GMI1000) (Ralstonia solanacearum).